The sequence spans 907 residues: Protein translocase subunit SecA (907 aa).

Residues Q87, G105–T109, and D513 each bind ATP. The span at E841–R853 shows a compositional bias: basic and acidic residues. The disordered stretch occupies residues E841–N907. Over residues R854 to Q865 the composition is skewed to low complexity. Over residues E872–R887 the composition is skewed to basic and acidic residues. Positions 891, 893, 902, and 903 each coordinate Zn(2+).

Belongs to the SecA family. Monomer and homodimer. Part of the essential Sec protein translocation apparatus which comprises SecA, SecYEG and auxiliary proteins SecDF-YajC and YidC. The cofactor is Zn(2+).

It is found in the cell inner membrane. The protein resides in the cytoplasm. The enzyme catalyses ATP + H2O + cellular proteinSide 1 = ADP + phosphate + cellular proteinSide 2.. In terms of biological role, part of the Sec protein translocase complex. Interacts with the SecYEG preprotein conducting channel. Has a central role in coupling the hydrolysis of ATP to the transfer of proteins into and across the cell membrane, serving both as a receptor for the preprotein-SecB complex and as an ATP-driven molecular motor driving the stepwise translocation of polypeptide chains across the membrane. This chain is Protein translocase subunit SecA, found in Vibrio vulnificus (strain YJ016).